The sequence spans 110 residues: UPF0122 protein SGO_1122 (110 aa).

Belongs to the UPF0122 family.

Its function is as follows. Might take part in the signal recognition particle (SRP) pathway. This is inferred from the conservation of its genetic proximity to ftsY/ffh. May be a regulatory protein. The protein is UPF0122 protein SGO_1122 of Streptococcus gordonii (strain Challis / ATCC 35105 / BCRC 15272 / CH1 / DL1 / V288).